Here is a 396-residue protein sequence, read N- to C-terminus: 4-hydroxy-3-methylbut-2-en-1-yl diphosphate synthase (ferredoxin) (396 aa).

Cysteine 305, cysteine 308, cysteine 339, and glutamate 346 together coordinate [4Fe-4S] cluster.

It belongs to the IspG family. [4Fe-4S] cluster is required as a cofactor.

The catalysed reaction is (2E)-4-hydroxy-3-methylbut-2-enyl diphosphate + 2 oxidized [2Fe-2S]-[ferredoxin] + H2O = 2-C-methyl-D-erythritol 2,4-cyclic diphosphate + 2 reduced [2Fe-2S]-[ferredoxin] + H(+). The protein operates within isoprenoid biosynthesis; isopentenyl diphosphate biosynthesis via DXP pathway; isopentenyl diphosphate from 1-deoxy-D-xylulose 5-phosphate: step 5/6. In terms of biological role, converts 2C-methyl-D-erythritol 2,4-cyclodiphosphate (ME-2,4cPP) into 1-hydroxy-2-methyl-2-(E)-butenyl 4-diphosphate. This Gloeobacter violaceus (strain ATCC 29082 / PCC 7421) protein is 4-hydroxy-3-methylbut-2-en-1-yl diphosphate synthase (ferredoxin).